A 232-amino-acid polypeptide reads, in one-letter code: MATSAASSEHFEKLHEIFRGLLEDLQGVPERLLGTAGTEEKKKLVRDFDEKQQEANETLAEMEEELRYAPLTFRNSMMSKLRNYRKDLAKLHREVRSTPLTATPGGRGDLKFGTYTLENEHLNRLQSQRALLLQGTESLNRATQSIERSHRIAAETDQIGSEIIEELGEQRDQLERTKSRLVNTNENLSKSRKILRSMSRKVITNKLLLSVIIVLELAILVGLVYYKFFRHH.

At Ala2 the chain carries N-acetylalanine. Interaction with CLINT1 stretches follow at residues 2 to 23 and 69 to 73; these read ATSA…GLLE and APLTF. The Cytoplasmic segment spans residues 2–208; it reads ATSAASSEHF…SRKVITNKLL (207 aa). Residues 36–98 are a coiled coil; the sequence is AGTEEKKKLV…AKLHREVRST (63 aa). Thr103 is subject to Phosphothreonine. Position 107 is an omega-N-methylarginine (Arg107). Ser138 carries the post-translational modification Phosphoserine. A coiled-coil region spans residues 160-201; the sequence is GSEIIEELGEQRDQLERTKSRLVNTNENLSKSRKILRSMSRK. Residues 209–229 traverse the membrane as a helical; Anchor for type IV membrane protein segment; the sequence is LSVIIVLELAILVGLVYYKFF. Topologically, residues 230 to 232 are vesicular; sequence RHH.

It belongs to the VTI1 family. In terms of assembly, forms a SNARE complex with STX7, STX8 and VAMP8 which functions in the homotypic fusion of late endosomes. Component of the SNARE complex composed of STX7, STX8, VAMP7 and VIT1B that is required for heterotypic fusion of late endosomes with lysosomes. May interact with STX17. Interacts with CLINT1.

The protein resides in the early endosome membrane. It is found in the late endosome membrane. The protein localises to the lysosome membrane. It localises to the cytoplasmic granule. Its subcellular location is the recycling endosome membrane. V-SNARE that mediates vesicle transport pathways through interactions with t-SNAREs on the target membrane. These interactions are proposed to mediate aspects of the specificity of vesicle trafficking and to promote fusion of the lipid bilayers. This is Vesicle transport through interaction with t-SNAREs homolog 1B (Vti1b) from Rattus norvegicus (Rat).